We begin with the raw amino-acid sequence, 317 residues long: Glycine--tRNA ligase alpha subunit (317 aa).

This sequence belongs to the class-II aminoacyl-tRNA synthetase family. Tetramer of two alpha and two beta subunits.

Its subcellular location is the cytoplasm. The catalysed reaction is tRNA(Gly) + glycine + ATP = glycyl-tRNA(Gly) + AMP + diphosphate. This chain is Glycine--tRNA ligase alpha subunit, found in Lactococcus lactis subsp. cremoris (strain SK11).